A 395-amino-acid chain; its full sequence is Oxalate oxidoreductase subunit alpha (395 aa).

Dimer of heterotrimer of one alpha, one beta and one delta subunit.

The enzyme catalyses oxidized 2[4Fe-4S]-[ferredoxin] + oxalate = reduced 2[4Fe-4S]-[ferredoxin] + 2 CO2. In terms of biological role, catalyzes the anaerobic oxidation of oxalate using a broad range of electron acceptors, including ferredoxin and the nickel-dependent carbon monoxide dehydrogenase. Does not require coenzyme A as cosubstrate. Enables anaerobic growth on oxalate which is used as energy source by the bacteria. This is Oxalate oxidoreductase subunit alpha from Moorella thermoacetica (strain ATCC 39073 / JCM 9320).